The chain runs to 264 residues: Thymidylate synthase (264 aa).

Residue Arg21 coordinates dUMP. (6R)-5,10-methylene-5,6,7,8-tetrahydrofolate is bound at residue His51. 126 to 127 is a dUMP binding site; it reads RR. Cys146 functions as the Nucleophile in the catalytic mechanism. Residues 166 to 169, Asn177, and 207 to 209 each bind dUMP; these read RSAD and HLY. Residue Asp169 participates in (6R)-5,10-methylene-5,6,7,8-tetrahydrofolate binding. Ala263 lines the (6R)-5,10-methylene-5,6,7,8-tetrahydrofolate pocket.

It belongs to the thymidylate synthase family. Bacterial-type ThyA subfamily. In terms of assembly, homodimer.

Its subcellular location is the cytoplasm. It catalyses the reaction dUMP + (6R)-5,10-methylene-5,6,7,8-tetrahydrofolate = 7,8-dihydrofolate + dTMP. It participates in pyrimidine metabolism; dTTP biosynthesis. Catalyzes the reductive methylation of 2'-deoxyuridine-5'-monophosphate (dUMP) to 2'-deoxythymidine-5'-monophosphate (dTMP) while utilizing 5,10-methylenetetrahydrofolate (mTHF) as the methyl donor and reductant in the reaction, yielding dihydrofolate (DHF) as a by-product. This enzymatic reaction provides an intracellular de novo source of dTMP, an essential precursor for DNA biosynthesis. This Hahella chejuensis (strain KCTC 2396) protein is Thymidylate synthase.